Consider the following 132-residue polypeptide: MSMTDPIADLLTRIRNANLAHHEVVEIPASKIKKSIAEILKSEGFIRDVEYIEDNKQGVIRVFLKYGEDRNRVITGIKRISKPGLRKYAKADSLPKVLNGLGIAIISTSAGVITDKEARSKQVGGEVIAYVW.

It belongs to the universal ribosomal protein uS8 family. Part of the 30S ribosomal subunit. Contacts proteins S5 and S12.

In terms of biological role, one of the primary rRNA binding proteins, it binds directly to 16S rRNA central domain where it helps coordinate assembly of the platform of the 30S subunit. This is Small ribosomal subunit protein uS8 from Leuconostoc citreum (strain KM20).